We begin with the raw amino-acid sequence, 565 residues long: NAD-dependent malic enzyme (565 aa).

The active-site Proton donor is Y104. R157 provides a ligand contact to NAD(+). The active-site Proton acceptor is K175. 3 residues coordinate a divalent metal cation: E246, D247, and D270. The NAD(+) site is built by D270 and N418.

Belongs to the malic enzymes family. Homotetramer. It depends on Mg(2+) as a cofactor. Mn(2+) is required as a cofactor.

The catalysed reaction is (S)-malate + NAD(+) = pyruvate + CO2 + NADH. The enzyme catalyses oxaloacetate + H(+) = pyruvate + CO2. The sequence is that of NAD-dependent malic enzyme from Enterobacter sp. (strain 638).